The following is a 259-amino-acid chain: Phosphate import ATP-binding protein PstB (259 aa).

In terms of domain architecture, ABC transporter spans 11–254 (AESKNLNFYY…PDNPRTEDYI (244 aa)). 43–50 (GPSGCGKS) is an ATP binding site.

The protein belongs to the ABC transporter superfamily. Phosphate importer (TC 3.A.1.7) family. In terms of assembly, the complex is composed of two ATP-binding proteins (PstB), two transmembrane proteins (PstC and PstA) and a solute-binding protein (PstS).

Its subcellular location is the cell inner membrane. It catalyses the reaction phosphate(out) + ATP + H2O = ADP + 2 phosphate(in) + H(+). Part of the ABC transporter complex PstSACB involved in phosphate import. Responsible for energy coupling to the transport system. The chain is Phosphate import ATP-binding protein PstB from Geobacter sulfurreducens (strain ATCC 51573 / DSM 12127 / PCA).